The chain runs to 429 residues: MENEQPVIPVQARFNSIKAFFVLLVRQFNEDGCRQSAAALTYTTLFAIVPVMTVSFVVLSSVPALQGKSAQLQEWAFEYFVPSAGNMLLDHLQSFAKQATNLTVLGIVFLVVTSVLMLSTVEQTLNRIWKVQTPRKGLVSLLMYWALLSLGPICLGLGLAITSYLTSQAIFSDTVSYLGGVRLWLAVLPFLFTTAMLTLMYTVVPNTTVPFRQGVLGAAMAALLFELAKGAFTFFIKQAPSYQVVYGAFAAVPVFLLWIYISWTIVLGGAELVRALVVFQEHQRQVPRMHALVRLLNVFWQRQQSGKVLRSKEIRQVMQESGISQWDEFRNLLVNANLIRRTDEGGYILSRDLRNISLGQLVAMLPWPAHTQLRVRQQPESLPWEQALKSRMDEAREGMMAPLDISLDALFSAPSAEKERHPEQQGRND.

Helical transmembrane passes span 45 to 65 (LFAI…VPAL), 102 to 122 (LTVL…STVE), 141 to 161 (LLMY…GLAI), 184 to 204 (WLAV…YTVV), 216 to 236 (LGAA…TFFI), and 256 to 278 (LLWI…ALVV).

It belongs to the UPF0761 family.

Its subcellular location is the cell inner membrane. This chain is UPF0761 membrane protein ABO_1543, found in Alcanivorax borkumensis (strain ATCC 700651 / DSM 11573 / NCIMB 13689 / SK2).